The following is a 207-amino-acid chain: uncharacterized protein (207 aa).

Catalysis depends on residues R80, E88, and R148.

The protein belongs to the thermonuclease family.

This is an uncharacterized protein from Methanocaldococcus jannaschii (strain ATCC 43067 / DSM 2661 / JAL-1 / JCM 10045 / NBRC 100440) (Methanococcus jannaschii).